Reading from the N-terminus, the 286-residue chain is ATP synthase gamma chain (286 aa).

It belongs to the ATPase gamma chain family. F-type ATPases have 2 components, CF(1) - the catalytic core - and CF(0) - the membrane proton channel. CF(1) has five subunits: alpha(3), beta(3), gamma(1), delta(1), epsilon(1). CF(0) has three main subunits: a, b and c.

The protein localises to the cell inner membrane. Its function is as follows. Produces ATP from ADP in the presence of a proton gradient across the membrane. The gamma chain is believed to be important in regulating ATPase activity and the flow of protons through the CF(0) complex. The polypeptide is ATP synthase gamma chain (Pseudomonas putida (strain GB-1)).